Consider the following 182-residue polypeptide: Peptidoglycan recognition protein 1 (182 aa).

Residues 1-18 (MLFACALLALLGLATSCS) form the signal peptide. 3 disulfide bridges follow: cysteine 17–cysteine 141, cysteine 33–cysteine 78, and cysteine 54–cysteine 60. One can recognise an N-acetylmuramoyl-L-alanine amidase domain in the interval 39-167 (HPVRYVVISH…RDVQSTLSPG (129 aa)).

It belongs to the N-acetylmuramoyl-L-alanine amidase 2 family. Homodimer; disulfide-linked. Interacts with HSPA1A; this interaction forms a cytotoxic complex that is released by lymphokine-activated killer cells. Interacts with HSPBP1; this interaction blocks the cytotoxic activity of the PGLYRP1-HSPA1A complex. Strongly expressed in spleen and lung. Also detected in brain and thymus. In the lung, expressed in the intraalveolar space, in the brain, expressed in the Purkinje cells of the cerebellum and in certain layers of neurons in the hippocampus. Also detected in cells filling the space within the intestinal villus.

The protein localises to the cytoplasm. Its subcellular location is the secreted. Functionally, innate immunity protein that plays several important functions in antimicrobial and antitumor defense systems. Acts as a pattern receptor that binds to murein peptidoglycans (PGN) of Gram-positive bacteria and thus provides bactericidal activity. Forms an equimolar complex with heat shock protein HSPA1A and induces programmed cell death through apoptosis and necroptosis in tumor cell lines by activating the TNFR1 receptor on the target cell membrane. In addition, acts in complex with the Ca(2+)-binding protein S100A4 as a chemoattractant able to induce lymphocyte movement. Mechanistically, this complex acts as a ligand of the chemotactic receptors CCR5 and CXCR3 which are present on the cells of the immune system. Also promotes the activation of lymphocytes that become able to kill virus-infected cells as well as tumor cells by modulating the spectrum of their target-cell specificity. Induction of cytotoxicity on monocyte surface requires interaction with TREM1 receptor. This Mus musculus (Mouse) protein is Peptidoglycan recognition protein 1 (Pglyrp1).